A 197-amino-acid polypeptide reads, in one-letter code: uncharacterized protein (197 aa).

The chain crosses the membrane as a helical span at residues 11-31; the sequence is ICGFSLVALTIAGIVGGVYLV.

The protein resides in the membrane. This is an uncharacterized protein from Mycoplasma pneumoniae (strain ATCC 29342 / M129 / Subtype 1) (Mycoplasmoides pneumoniae).